Reading from the N-terminus, the 78-residue chain is Pancreatic polypeptide prohormone (78 aa).

The signal sequence occupies residues 1 to 19 (LLLSTCVALLLQPPLGALG). At Tyr-55 the chain carries Tyrosine amide.

This sequence belongs to the NPY family.

It localises to the secreted. Functionally, hormone secreted by pancreatic cells that acts as a regulator of pancreatic and gastrointestinal functions probably by signaling through the G protein-coupled receptor NPY4R2. This chain is Pancreatic polypeptide prohormone (PPY), found in Ovis aries (Sheep).